Here is a 472-residue protein sequence, read N- to C-terminus: Probable dipeptidase A (472 aa).

Residue Cys-10 is part of the active site.

This sequence belongs to the peptidase C69 family.

The catalysed reaction is an L-aminoacyl-L-amino acid + H2O = 2 an L-alpha-amino acid. This Streptococcus pyogenes serotype M1 protein is Probable dipeptidase A (pepDA).